A 548-amino-acid polypeptide reads, in one-letter code: Ran-binding protein 9 (548 aa).

The interval 1–23 (MSSPPLHGLSSVGHLSRDPPPRS) is disordered. One can recognise a B30.2/SPRY domain in the interval 2 to 189 (SSPPLHGLSS…VDANFGQSPF (188 aa)). The region spanning 217–249 (WQSMIQRMVSSYLVHHGYCSTAEAFAKSTDQTV) is the LisH domain. The 58-residue stretch at 255-312 (SIKNRQRIQKLVLSGRMGEAIETTQQLYPSLLERNPNLLFTLKVRQFIEMVNGTDSEV) folds into the CTLH domain.

Belongs to the RANBP9/10 family. Identified in the CTLH complex that contains at least MAEA, RMND5A (or alternatively its paralog RMND5B), GID8, WDR26, and RANBP9 and/or RANBP10.

The protein localises to the cytoplasm. Its subcellular location is the cell membrane. The protein resides in the nucleus. Functionally, may act as scaffolding protein, and as adapter protein to couple membrane receptors to intracellular signaling pathways. Acts as a mediator of cell spreading and actin cytoskeleton rearrangement. Core component of the CTLH E3 ubiquitin-protein ligase complex that mediates ubiquitination and subsequent proteasomal degradation of target proteins. This chain is Ran-binding protein 9 (ranbp9), found in Xenopus laevis (African clawed frog).